Consider the following 220-residue polypeptide: Protein-L-isoaspartate O-methyltransferase (220 aa).

The active site involves Ser-65.

This sequence belongs to the methyltransferase superfamily. L-isoaspartyl/D-aspartyl protein methyltransferase family.

Its subcellular location is the cytoplasm. It carries out the reaction [protein]-L-isoaspartate + S-adenosyl-L-methionine = [protein]-L-isoaspartate alpha-methyl ester + S-adenosyl-L-homocysteine. Functionally, catalyzes the methyl esterification of L-isoaspartyl residues in peptides and proteins that result from spontaneous decomposition of normal L-aspartyl and L-asparaginyl residues. It plays a role in the repair and/or degradation of damaged proteins. This chain is Protein-L-isoaspartate O-methyltransferase (pcm), found in Pyrococcus horikoshii (strain ATCC 700860 / DSM 12428 / JCM 9974 / NBRC 100139 / OT-3).